The chain runs to 313 residues: Porphobilinogen deaminase (313 aa).

Cys242 is modified (S-(dipyrrolylmethanemethyl)cysteine).

This sequence belongs to the HMBS family. As to quaternary structure, monomer. It depends on dipyrromethane as a cofactor.

It carries out the reaction 4 porphobilinogen + H2O = hydroxymethylbilane + 4 NH4(+). It functions in the pathway porphyrin-containing compound metabolism; protoporphyrin-IX biosynthesis; coproporphyrinogen-III from 5-aminolevulinate: step 2/4. Tetrapolymerization of the monopyrrole PBG into the hydroxymethylbilane pre-uroporphyrinogen in several discrete steps. This chain is Porphobilinogen deaminase, found in Klebsiella pneumoniae (strain 342).